A 273-amino-acid polypeptide reads, in one-letter code: Ethanolamine ammonia-lyase small subunit (273 aa).

Adenosylcob(III)alamin is bound by residues V164, E185, and C214.

It belongs to the EutC family. The basic unit is a heterodimer which dimerizes to form tetramers. The heterotetramers trimerize; 6 large subunits form a core ring with 6 small subunits projecting outwards. It depends on adenosylcob(III)alamin as a cofactor.

It localises to the bacterial microcompartment. The catalysed reaction is ethanolamine = acetaldehyde + NH4(+). It participates in amine and polyamine degradation; ethanolamine degradation. Catalyzes the deamination of various vicinal amino-alcohols to oxo compounds. Allows this organism to utilize ethanolamine as the sole source of nitrogen and carbon in the presence of external vitamin B12. This is Ethanolamine ammonia-lyase small subunit from Pseudomonas aeruginosa (strain UCBPP-PA14).